The sequence spans 695 residues: ATP-dependent zinc metalloprotease FTSH 2, chloroplastic (695 aa).

The transit peptide at 1–47 (MAASSACLVGNGLSVNTTTKQRLSKHFSGRQTSFSSVIRTSKVNVVK) directs the protein to the chloroplast. The transit peptide at 48-82 (ASLDGKKKQEGRRDFLKILLGNAGVGLVASGKANA) directs the protein to the thylakoid. Residues 83-167 (DEQGVSSSRM…AHNAQEDQGS (85 aa)) lie on the Lumenal, thylakoid side of the membrane. A helical membrane pass occupies residues 168-188 (VLFNLIGNLAFPALLIGGLFL). At 189–695 (LSRRSGGGMG…PASAPTPAAV (507 aa)) the chain is on the stromal side. 267-274 (GPPGTGKT) serves as a coordination point for ATP. H488 contributes to the Zn(2+) binding site. Residue E489 is part of the active site. Zn(2+) is bound by residues H492 and D566. The interval 673-695 (PPENRVPSSTTTTPASAPTPAAV) is disordered. The span at 679-695 (PSSTTTTPASAPTPAAV) shows a compositional bias: low complexity.

It in the N-terminal section; belongs to the AAA ATPase family. The protein in the C-terminal section; belongs to the peptidase M41 family. In terms of assembly, interacts with CHIP and FTSH5. Heterohexamers with FTSH1, FTSH5 and FTSH8. May also form homooligomers. It depends on Zn(2+) as a cofactor. The FTSH2 precursor is ubiquitinated by CHIP in the cytoplasm. As to expression, expressed in cotyledons, cauline and rosette leaves, stems, sepals, flovers and siliques. Very low in roots.

Its subcellular location is the plastid. It is found in the chloroplast thylakoid membrane. Functionally, part of a complex that function as an ATP-dependent zinc metallopeptidase. Involved in the thylakoid formation and in the removal of damaged D1 in the photosystem II, preventing cell death under high-intensity light conditions, but not involved in thermotolerance. The chain is ATP-dependent zinc metalloprotease FTSH 2, chloroplastic (FTSH2) from Arabidopsis thaliana (Mouse-ear cress).